The chain runs to 387 residues: Phosphoglycerate kinase (387 aa).

Substrate is bound by residues 21 to 23 (DLN), Arg-36, and 59 to 62 (HLGR). Lys-84 is subject to N6-acetyllysine. Substrate contacts are provided by Arg-113 and Arg-146. Residues Lys-197, Glu-314, and 340-343 (GGDT) contribute to the ATP site.

This sequence belongs to the phosphoglycerate kinase family. Monomer.

It localises to the cytoplasm. It carries out the reaction (2R)-3-phosphoglycerate + ATP = (2R)-3-phospho-glyceroyl phosphate + ADP. Its pathway is carbohydrate degradation; glycolysis; pyruvate from D-glyceraldehyde 3-phosphate: step 2/5. This Escherichia coli O139:H28 (strain E24377A / ETEC) protein is Phosphoglycerate kinase.